Reading from the N-terminus, the 492-residue chain is uncharacterized protein (492 aa).

Residues 30 to 46 (YVCLSVAVAAVGYANYM) form a helical membrane-spanning segment. Residues 144–210 (NYYDVLNVNE…IRKNIYDNEG (67 aa)) enclose the J domain.

It is found in the membrane. This is an uncharacterized protein from Plasmodium falciparum (isolate 3D7).